Here is a 420-residue protein sequence, read N- to C-terminus: Corticotropin-releasing factor receptor 1 (420 aa).

The signal sequence occupies residues 1 to 28 (MVPGPRPALLLLLFLLQAFLLWDSPVAA). Residues 29–116 (SIQEQYCESL…CQEILSEEKR (88 aa)) lie on the Extracellular side of the membrane. 3 cysteine pairs are disulfide-bonded: Cys35-Cys59, Cys49-Cys92, and Cys73-Cys107. N-linked (GlcNAc...) asparagine glycans are attached at residues Asn43, Asn50, Asn83, Asn95, and Asn103. Residues 117–147 (SKLHYHIAVIINYLGHCVSLGTLLVAFVLFM) traverse the membrane as a helical segment. Topologically, residues 148–154 (RLRSIRC) are cytoplasmic. The helical transmembrane segment at 155–179 (LRNIIHWNLITAFILRNATWFVVQL) threads the bilayer. The Extracellular portion of the chain corresponds to 180–194 (TMNPEVHESNVVWCR). A disulfide bond links Cys193 and Cys263. Residues 195–223 (LVTAAYNYFHVTNFFWMFGEGCYLHTAIV) form a helical membrane-spanning segment. The Cytoplasmic portion of the chain corresponds to 224–230 (LTYSTDK). A helical membrane pass occupies residues 231–258 (LRKWMFICIGWCIPFPIIVAWAIGKLYY). Residues 259 to 274 (DNEKCWFGKRAGVYTD) lie on the Extracellular side of the membrane. Residues 275–300 (YIYQGPMILVLLINFIFLFNIVRILM) traverse the membrane as a helical segment. The Cytoplasmic portion of the chain corresponds to 301–311 (TKLRASTTSET). The helical transmembrane segment at 312-336 (IQYRKAVKATLVLLSLLGITYMLFF) threads the bilayer. Over 337–343 (VNPGEDE) the chain is Extracellular. The chain crosses the membrane as a helical span at residues 344-373 (ISRIVFIYFNSFLESFQGFFVSVFYCFLNS). Over 374–420 (EVRSAVRKRWHRWQDKHSIRARVARAMSIPTSPTRVSFHSIKQSSAV) the chain is Cytoplasmic.

Belongs to the G-protein coupled receptor 2 family. Interacts (via N-terminal extracellular domain) with CRF and UCN.

It localises to the cell membrane. Functionally, G-protein coupled receptor for CRH (corticotropin-releasing factor) and UCN (urocortin). Has high affinity for CRH and UCN. Ligand binding causes a conformation change that triggers signaling via guanine nucleotide-binding proteins (G proteins) and down-stream effectors, such as adenylate cyclase. Promotes the activation of adenylate cyclase, leading to increased intracellular cAMP levels. This chain is Corticotropin-releasing factor receptor 1 (CRHR1), found in Gallus gallus (Chicken).